Reading from the N-terminus, the 38-residue chain is Small ribosomal subunit protein eS32 (38 aa).

Belongs to the eukaryotic ribosomal protein eS32 family. In terms of assembly, component of the small ribosomal subunit (SSU).

In Methanocaldococcus jannaschii (strain ATCC 43067 / DSM 2661 / JAL-1 / JCM 10045 / NBRC 100440) (Methanococcus jannaschii), this protein is Small ribosomal subunit protein eS32 (rpl41e).